The primary structure comprises 177 residues: Ribulose bisphosphate carboxylase small subunit, chloroplastic 4 (177 aa).

The transit peptide at 1–56 directs the protein to the chloroplast; that stretch reads MASSMMASTAAAVARAGPAQTNMVPFNACRSSVPFPATRKANNDLSTLPSNGGRVS.

This sequence belongs to the RuBisCO small chain family. Heterohexadecamer of 8 large and 8 small subunits.

Its subcellular location is the plastid. The protein resides in the chloroplast. In terms of biological role, ruBisCO catalyzes two reactions: the carboxylation of D-ribulose 1,5-bisphosphate, the primary event in carbon dioxide fixation, as well as the oxidative fragmentation of the pentose substrate. Both reactions occur simultaneously and in competition at the same active site. Although the small subunit is not catalytic it is essential for maximal activity. The chain is Ribulose bisphosphate carboxylase small subunit, chloroplastic 4 from Lemna gibba (Swollen duckweed).